A 327-amino-acid chain; its full sequence is Ribose-phosphate pyrophosphokinase (327 aa).

51 to 53 is a binding site for ATP; the sequence is DGE. The Mg(2+) site is built by His144 and Asp183. Residue Lys207 is part of the active site. D-ribose 5-phosphate-binding positions include Arg209, Asp233, and 237–241; that span reads DTGGT.

This sequence belongs to the ribose-phosphate pyrophosphokinase family. Class I subfamily. In terms of assembly, homohexamer. Mg(2+) serves as cofactor.

The protein resides in the cytoplasm. It carries out the reaction D-ribose 5-phosphate + ATP = 5-phospho-alpha-D-ribose 1-diphosphate + AMP + H(+). It participates in metabolic intermediate biosynthesis; 5-phospho-alpha-D-ribose 1-diphosphate biosynthesis; 5-phospho-alpha-D-ribose 1-diphosphate from D-ribose 5-phosphate (route I): step 1/1. In terms of biological role, involved in the biosynthesis of the central metabolite phospho-alpha-D-ribosyl-1-pyrophosphate (PRPP) via the transfer of pyrophosphoryl group from ATP to 1-hydroxyl of ribose-5-phosphate (Rib-5-P). In Prochlorococcus marinus (strain SARG / CCMP1375 / SS120), this protein is Ribose-phosphate pyrophosphokinase.